Reading from the N-terminus, the 210-residue chain is Thiamine-phosphate synthase (210 aa).

Residues 39-43 and asparagine 71 contribute to the 4-amino-2-methyl-5-(diphosphooxymethyl)pyrimidine site; that span reads QLREK. Aspartate 72 and aspartate 91 together coordinate Mg(2+). 4-amino-2-methyl-5-(diphosphooxymethyl)pyrimidine is bound at residue serine 110. A 2-[(2R,5Z)-2-carboxy-4-methylthiazol-5(2H)-ylidene]ethyl phosphate-binding site is contributed by 134-136; it reads TPT. Lysine 137 serves as a coordination point for 4-amino-2-methyl-5-(diphosphooxymethyl)pyrimidine. Glycine 163 contacts 2-[(2R,5Z)-2-carboxy-4-methylthiazol-5(2H)-ylidene]ethyl phosphate.

It belongs to the thiamine-phosphate synthase family. The cofactor is Mg(2+).

The enzyme catalyses 2-[(2R,5Z)-2-carboxy-4-methylthiazol-5(2H)-ylidene]ethyl phosphate + 4-amino-2-methyl-5-(diphosphooxymethyl)pyrimidine + 2 H(+) = thiamine phosphate + CO2 + diphosphate. The catalysed reaction is 2-(2-carboxy-4-methylthiazol-5-yl)ethyl phosphate + 4-amino-2-methyl-5-(diphosphooxymethyl)pyrimidine + 2 H(+) = thiamine phosphate + CO2 + diphosphate. It carries out the reaction 4-methyl-5-(2-phosphooxyethyl)-thiazole + 4-amino-2-methyl-5-(diphosphooxymethyl)pyrimidine + H(+) = thiamine phosphate + diphosphate. It functions in the pathway cofactor biosynthesis; thiamine diphosphate biosynthesis; thiamine phosphate from 4-amino-2-methyl-5-diphosphomethylpyrimidine and 4-methyl-5-(2-phosphoethyl)-thiazole: step 1/1. Its function is as follows. Condenses 4-methyl-5-(beta-hydroxyethyl)thiazole monophosphate (THZ-P) and 2-methyl-4-amino-5-hydroxymethyl pyrimidine pyrophosphate (HMP-PP) to form thiamine monophosphate (TMP). The protein is Thiamine-phosphate synthase of Campylobacter jejuni subsp. jejuni serotype O:6 (strain 81116 / NCTC 11828).